A 312-amino-acid chain; its full sequence is Probable rRNA-processing protein EBP2 (312 aa).

The disordered stretch occupies residues 1–32 (MLHHEDESSPESDSDFDASELTDKELQEAFSQ). A compositionally biased stretch (acidic residues) spans 8-20 (SSPESDSDFDASE). Residues 140 to 176 (EMAKTDQHMQKIRHKLQLKQASMEKSEKAKQLRALRK) are a coiled coil. The tract at residues 211–312 (LDFLEGDQTP…VRQKMKSKRR (102 aa)) is disordered. The segment covering 282–312 (KGPHRPGKKGGKNANKRPGKNVRQKMKSKRR) has biased composition (basic residues).

It belongs to the EBP2 family.

It localises to the nucleus. Its subcellular location is the nucleolus. In terms of biological role, required for the processing of the 27S pre-rRNA. This chain is Probable rRNA-processing protein EBP2 (ebna1bp2), found in Xenopus laevis (African clawed frog).